A 344-amino-acid polypeptide reads, in one-letter code: L-threonine 3-dehydrogenase (344 aa).

C42 lines the Zn(2+) pocket. Catalysis depends on charge relay system residues T44 and H47. H67, E68, C97, C100, C103, and C111 together coordinate Zn(2+). Residues I179, D199, R204, 266–268, and 290–291 contribute to the NAD(+) site; these read LGI and IY.

The protein belongs to the zinc-containing alcohol dehydrogenase family. Homotetramer. Zn(2+) serves as cofactor.

The protein localises to the cytoplasm. The enzyme catalyses L-threonine + NAD(+) = (2S)-2-amino-3-oxobutanoate + NADH + H(+). Its pathway is amino-acid degradation; L-threonine degradation via oxydo-reductase pathway; glycine from L-threonine: step 1/2. In terms of biological role, catalyzes the NAD(+)-dependent oxidation of L-threonine to 2-amino-3-ketobutyrate. This chain is L-threonine 3-dehydrogenase, found in Mesorhizobium japonicum (strain LMG 29417 / CECT 9101 / MAFF 303099) (Mesorhizobium loti (strain MAFF 303099)).